Here is a 534-residue protein sequence, read N- to C-terminus: Transcription factor RBF1 (534 aa).

Residues 1-36 (MSSNKNQSDLNIPTNSASLKQKQRQQLGIKSEIGAS) form a disordered region. The stretch at 77–147 (AAAAELQHRA…YQQQQQLHQL (71 aa)) forms a coiled coil. 4 disordered regions span residues 262–285 (ANLYPNEKDQKRKNKPDEPGHNEE), 353–372 (QQQQQQQQHNANSQAQQQAA), 402–439 (QLSQQQSQQQQLHHIPQQRQRTQSQQSQQQPQQTPHGL), and 477–534 (TQGN…SGFL). A compositionally biased stretch (basic and acidic residues) spans 267-285 (NEKDQKRKNKPDEPGHNEE). Positions 332 to 386 (HHLLQQEQQQQQQQQQQQQQQQQQQQQQQHNANSQAQQQAAQLQQQMQQQLQASG) form a coiled coil. A compositionally biased stretch (low complexity) spans 402-435 (QLSQQQSQQQQLHHIPQQRQRTQSQQSQQQPQQT).

It belongs to the RBF1 family.

The protein resides in the nucleus. The protein localises to the chromosome. It localises to the telomere. Its function is as follows. Transcriptional activator that binds to the RPG box and to telomeres. Involved in the regulation of the transition between yeast and filamentous forms and plays a role in virulence. Induces expression of HWP1, a major hyphal cell protein and virulence factor. The polypeptide is Transcription factor RBF1 (RBF1) (Candida albicans (strain SC5314 / ATCC MYA-2876) (Yeast)).